A 570-amino-acid chain; its full sequence is Formate--tetrahydrofolate ligase (570 aa).

65–72 (TPFGEGKT) lines the ATP pocket.

This sequence belongs to the formate--tetrahydrofolate ligase family.

The enzyme catalyses (6S)-5,6,7,8-tetrahydrofolate + formate + ATP = (6R)-10-formyltetrahydrofolate + ADP + phosphate. It functions in the pathway one-carbon metabolism; tetrahydrofolate interconversion. In Shewanella sediminis (strain HAW-EB3), this protein is Formate--tetrahydrofolate ligase.